We begin with the raw amino-acid sequence, 67 residues long: MHAPLSLLKQMLKEHQIDTEKAVTFEEYIAMRLKLQELMGKFASIGEWDLYQKAADLMMHIGIQWMK.

This is an uncharacterized protein from Bacillus subtilis (strain 168).